Here is a 310-residue protein sequence, read N- to C-terminus: tRNA-splicing endonuclease subunit Sen34 (310 aa).

The tract at residues 119-177 is disordered; it reads GQAAKKQKLEQASGASSSQEAGSSQAAKEDETSDGQASGEQEEAGPSSSQAGPSNGVAP. A compositionally biased stretch (low complexity) spans 128–144; it reads EQASGASSSQEAGSSQA. Residues Y247, H255, and K286 contribute to the active site.

Belongs to the tRNA-intron endonuclease family. TRNA splicing endonuclease is a heterotetramer composed of TSEN2, TSEN15, TSEN34/LENG5 and TSEN54. tRNA splicing endonuclease complex also contains proteins of the pre-mRNA 3'-end processing machinery such as CLP1, CPSF1, CPSF4 and CSTF2.

The protein resides in the nucleus. It localises to the nucleolus. It carries out the reaction pretRNA = a 3'-half-tRNA molecule with a 5'-OH end + a 5'-half-tRNA molecule with a 2',3'-cyclic phosphate end + an intron with a 2',3'-cyclic phosphate and a 5'-hydroxyl terminus.. Its function is as follows. Constitutes one of the two catalytic subunit of the tRNA-splicing endonuclease complex, a complex responsible for identification and cleavage of the splice sites in pre-tRNA. It cleaves pre-tRNA at the 5'- and 3'-splice sites to release the intron. The products are an intron and two tRNA half-molecules bearing 2',3'-cyclic phosphate and 5'-OH termini. There are no conserved sequences at the splice sites, but the intron is invariably located at the same site in the gene, placing the splice sites an invariant distance from the constant structural features of the tRNA body. It probably carries the active site for 3'-splice site cleavage. The tRNA splicing endonuclease is also involved in mRNA processing via its association with pre-mRNA 3'-end processing factors, establishing a link between pre-tRNA splicing and pre-mRNA 3'-end formation, suggesting that the endonuclease subunits function in multiple RNA-processing events. The sequence is that of tRNA-splicing endonuclease subunit Sen34 (TSEN34) from Homo sapiens (Human).